The sequence spans 951 residues: Cation channel sperm-associated auxiliary subunit epsilon (951 aa).

An N-terminal signal peptide occupies residues 1 to 19 (MSAREVAVLLLWLSCYGSA). Topologically, residues 20-903 (LWRYSTNSPN…ETFGLIPSPS (884 aa)) are extracellular. Disulfide bonds link cysteine 57-cysteine 71, cysteine 101-cysteine 206, cysteine 246-cysteine 336, and cysteine 410-cysteine 413. Asparagine 61 and asparagine 114 each carry an N-linked (GlcNAc...) asparagine glycan. N-linked (GlcNAc...) asparagine glycosylation is found at asparagine 414, asparagine 472, asparagine 487, asparagine 493, and asparagine 535. 4 cysteine pairs are disulfide-bonded: cysteine 583-cysteine 690, cysteine 703-cysteine 885, cysteine 719-cysteine 752, and cysteine 804-cysteine 835. A glycan (N-linked (GlcNAc...) asparagine) is linked at asparagine 796. Residues asparagine 854, asparagine 881, and asparagine 886 are each glycosylated (N-linked (GlcNAc...) asparagine). A helical membrane pass occupies residues 904–924 (VYLVASFLFVLMLLFFTILVL). The Cytoplasmic segment spans residues 925–951 (SYFRYMRIYRRYIYEPLHKPQRKRKKN).

It belongs to the CATSPERD family. As to quaternary structure, component of the CatSper complex or CatSpermasome composed of the core pore-forming members CATSPER1, CATSPER2, CATSPER3 and CATSPER4 as well as auxiliary members CATSPERB, CATSPERG, CATSPERD, CATSPERE, CATSPERZ, C2CD6/CATSPERT, TMEM249, TMEM262 and EFCAB9. HSPA1 may be an additional auxiliary complex member. The core complex members CATSPER1, CATSPER2, CATSPER3 and CATSPER4 form a heterotetrameric channel. The auxiliary CATSPERB, CATSPERG, CATSPERD and CATSPERE subunits form a pavilion-like structure over the pore which stabilizes the complex through interactions with CATSPER4, CATSPER3, CATSPER1 and CATSPER2 respectively. TMEM262/CATSPERH interacts with CATSPERB, further stabilizing the complex. C2CD6/CATSPERT interacts at least with CATSPERD and is required for targeting the CatSper complex in the flagellar membrane.

It is found in the cell projection. The protein localises to the cilium. The protein resides in the flagellum membrane. Auxiliary component of the CatSper complex, a complex involved in sperm cell hyperactivation. Sperm cell hyperactivation is needed for sperm motility which is essential late in the preparation of sperm for fertilization. This is Cation channel sperm-associated auxiliary subunit epsilon from Homo sapiens (Human).